A 1759-amino-acid chain; its full sequence is Protein TIC 214 (1759 aa).

The next 5 membrane-spanning stretches (helical) occupy residues 23 to 45 (VVVG…LFLL), 64 to 84 (FITG…HLAL), 129 to 149 (IFFQ…SSIF), 172 to 192 (IGWI…LICI), and 221 to 241 (IFVV…PPPF).

It belongs to the TIC214 family. As to quaternary structure, part of the Tic complex.

It is found in the plastid. The protein localises to the chloroplast inner membrane. Its function is as follows. Involved in protein precursor import into chloroplasts. May be part of an intermediate translocation complex acting as a protein-conducting channel at the inner envelope. The chain is Protein TIC 214 from Phaseolus vulgaris (Kidney bean).